The sequence spans 486 residues: UDP-N-acetylmuramoyl-L-alanyl-D-glutamate--2,6-diaminopimelate ligase (486 aa).

Serine 34 contributes to the UDP-N-acetyl-alpha-D-muramoyl-L-alanyl-D-glutamate binding site. 112–118 (GTAGKTS) serves as a coordination point for ATP. UDP-N-acetyl-alpha-D-muramoyl-L-alanyl-D-glutamate-binding positions include 154 to 155 (TT), serine 181, glutamine 187, and arginine 189. Position 221 is an N6-carboxylysine (lysine 221). Meso-2,6-diaminopimelate is bound by residues arginine 385, 409 to 412 (DNPR), glycine 457, and glutamate 461. The Meso-diaminopimelate recognition motif motif lies at 409–412 (DNPR).

It belongs to the MurCDEF family. MurE subfamily. Mg(2+) is required as a cofactor. In terms of processing, carboxylation is probably crucial for Mg(2+) binding and, consequently, for the gamma-phosphate positioning of ATP.

The protein localises to the cytoplasm. The enzyme catalyses UDP-N-acetyl-alpha-D-muramoyl-L-alanyl-D-glutamate + meso-2,6-diaminopimelate + ATP = UDP-N-acetyl-alpha-D-muramoyl-L-alanyl-gamma-D-glutamyl-meso-2,6-diaminopimelate + ADP + phosphate + H(+). The protein operates within cell wall biogenesis; peptidoglycan biosynthesis. Its function is as follows. Catalyzes the addition of meso-diaminopimelic acid to the nucleotide precursor UDP-N-acetylmuramoyl-L-alanyl-D-glutamate (UMAG) in the biosynthesis of bacterial cell-wall peptidoglycan. This chain is UDP-N-acetylmuramoyl-L-alanyl-D-glutamate--2,6-diaminopimelate ligase, found in Rhizobium meliloti (strain 1021) (Ensifer meliloti).